A 120-amino-acid polypeptide reads, in one-letter code: Dihydroneopterin triphosphate 2'-epimerase (120 aa).

The protein belongs to the DHNA family. In terms of assembly, homooctamer.

The catalysed reaction is 7,8-dihydroneopterin 3'-triphosphate = 7,8-dihydromonapterin 3'-triphosphate. Functionally, catalyzes the epimerization of carbon 2' of the side chain of 7,8-dihydroneopterin triphosphate (H2NTP) to form 7,8-dihydromonapterin triphosphate (H2MTP). Is required for tetrahydromonapterin biosynthesis. The protein is Dihydroneopterin triphosphate 2'-epimerase (folX) of Escherichia coli O157:H7.